Here is a 384-residue protein sequence, read N- to C-terminus: tRNA 2-selenouridine synthase (384 aa).

A Rhodanese domain is found at Phe-15–Glu-138. Residue Cys-98 is the S-selanylcysteine intermediate of the active site.

Belongs to the SelU family. Monomer.

It carries out the reaction 5-methylaminomethyl-2-thiouridine(34) in tRNA + selenophosphate + (2E)-geranyl diphosphate + H2O + H(+) = 5-methylaminomethyl-2-selenouridine(34) in tRNA + (2E)-thiogeraniol + phosphate + diphosphate. The catalysed reaction is 5-methylaminomethyl-2-thiouridine(34) in tRNA + (2E)-geranyl diphosphate = 5-methylaminomethyl-S-(2E)-geranyl-thiouridine(34) in tRNA + diphosphate. It catalyses the reaction 5-methylaminomethyl-S-(2E)-geranyl-thiouridine(34) in tRNA + selenophosphate + H(+) = 5-methylaminomethyl-2-(Se-phospho)selenouridine(34) in tRNA + (2E)-thiogeraniol. The enzyme catalyses 5-methylaminomethyl-2-(Se-phospho)selenouridine(34) in tRNA + H2O = 5-methylaminomethyl-2-selenouridine(34) in tRNA + phosphate. Functionally, involved in the post-transcriptional modification of the uridine at the wobble position (U34) of tRNA(Lys), tRNA(Glu) and tRNA(Gln). Catalyzes the conversion of 2-thiouridine (S2U-RNA) to 2-selenouridine (Se2U-RNA). Acts in a two-step process involving geranylation of 2-thiouridine (S2U) to S-geranyl-2-thiouridine (geS2U) and subsequent selenation of the latter derivative to 2-selenouridine (Se2U) in the tRNA chain. The protein is tRNA 2-selenouridine synthase of Shewanella sp. (strain MR-4).